The sequence spans 74 residues: Kappa-stichotoxin-Hmg1a (74 aa).

An N-terminal signal peptide occupies residues 1-22 (MKSQMIAAVLLIAFCLCVVVTA). Positions 23 to 39 (RMELQDVEDMENGFQKR) are excised as a propeptide. The 33-residue stretch at 42-74 (CKDLIPVSECTDIRCRTSMKYRLNLCRKTCGSC) folds into the ShKT domain. 3 cysteine pairs are disulfide-bonded: C42–C74, C51–C67, and C56–C71.

This sequence belongs to the sea anemone type 1 potassium channel toxin family. Type 1a subfamily.

The protein localises to the secreted. The protein resides in the nematocyst. In terms of biological role, potently blocks the voltage-gated potassium channel Kv1.1/KCNA1 (Ki=75 pM), KcsA (Ki~1 nM) and moderately blocks Kv1.2/KCNA2 (Ki=2.5 nM) and Kv1.3/KCNA3 (Ki=3.1 nM). Also facilitates acetylcholine release at the avian neuromuscular junction. Blockade and dissociation rate are sensitive to voltage. The sequence is that of Kappa-stichotoxin-Hmg1a from Heteractis magnifica (Magnificent sea anemone).